A 408-amino-acid chain; its full sequence is Aminoacylase-1 (408 aa).

Histidine 80 contacts Zn(2+). Residue aspartate 82 is part of the active site. Aspartate 113 provides a ligand contact to Zn(2+). The active-site Proton acceptor is glutamate 147. Residues glutamate 148, glutamate 175, and histidine 373 each contribute to the Zn(2+) site.

Belongs to the peptidase M20A family. Homodimer. Interacts with SPHK1. Zn(2+) is required as a cofactor.

The protein resides in the cytoplasm. It carries out the reaction an N-acyl-L-amino acid + H2O = an L-alpha-amino acid + a carboxylate. The catalysed reaction is N-acetyl-L-methionine + H2O = L-methionine + acetate. The enzyme catalyses N-acetyl-L-glutamine + H2O = L-glutamine + acetate. Its function is as follows. Catalyzes the hydrolysis of N-acetylated amino acids to acetate and free amino acids. In Pongo abelii (Sumatran orangutan), this protein is Aminoacylase-1 (ACY1).